A 99-amino-acid chain; its full sequence is Ribosomal processing cysteine protease Prp (99 aa).

The Proton donor role is filled by His16. Cys28 serves as the catalytic Nucleophile.

This sequence belongs to the Prp family. As to quaternary structure, homodimer.

Its function is as follows. An essential cysteine protease that cleaves the N-terminus from ribosomal protein bL27. The polypeptide is Ribosomal processing cysteine protease Prp (Mycoplasma genitalium (strain ATCC 33530 / DSM 19775 / NCTC 10195 / G37) (Mycoplasmoides genitalium)).